A 368-amino-acid chain; its full sequence is COP9 signalosome complex subunit 5 (368 aa).

An MPN domain is found at 56–193 (IKISAIALLK…IGAFRTYPEG (138 aa)). Zn(2+)-binding residues include His-139, His-141, and Asp-152. A JAMM motif motif is present at residues 139–152 (HSHPGYGCWLSGID). The disordered stretch occupies residues 347–368 (TEPEKAGPSPSAPEPAVEMADA).

Belongs to the peptidase M67A family. CSN5 subfamily. As to quaternary structure, component of the CSN complex, probably composed of csn-1, csn-2, csn-3, csn-4, csn-5, csn-6 and csn-7. Within the complex it probably interacts directly with csn-1. Interacts with glh-1 and glh-3. Interacts with lag-1. Interacts with kgb-1. The cofactor is a divalent metal cation.

The protein localises to the cytoplasm. It localises to the nucleus. In terms of biological role, probable protease subunit of the COP9 signalosome complex (CSN), a complex involved in various cellular and developmental processes. The CSN complex is an essential regulator of the ubiquitin (Ubl) conjugation pathway by mediating the deneddylation of the cullin subunits of the SCF-type E3 ligase complexes, leading to decrease the Ubl ligase activity of SCF. In the complex, it probably acts as the catalytic center that mediates the cleavage of Nedd8 from cullins. It however has no metalloprotease activity by itself and requires the other subunits of the CSN complex. The CSN complex plays an essential role in embryogenesis and oogenesis and is required to regulate microtubule stability in the early embryo. Mediates mei-3/katanin targeting for degradation at the meiosis to mitosis transition via deneddylation of cul-3. May stabilize glh-1 protein levels by antagonizing kgb-1. The polypeptide is COP9 signalosome complex subunit 5 (csn-5) (Caenorhabditis elegans).